A 421-amino-acid chain; its full sequence is Galactooligosaccharide-binding protein (421 aa).

An N-terminal signal peptide occupies residues 1–22 (MKMAKKCSVFMLCAAVSLSLAA). A lipid anchor (N-palmitoyl cysteine) is attached at cysteine 23. Residue cysteine 23 is the site of S-diacylglycerol cysteine attachment. The tract at residues 393–421 (ATGKADPKQALDQAAETAKGQIKAKHSGK) is disordered.

Belongs to the bacterial solute-binding protein 1 family. In terms of assembly, the complex is composed of two ATP-binding proteins (MsmX), two transmembrane proteins (GanP and GanQ) and a solute-binding protein (GanS).

The protein localises to the cell membrane. Involved in galactan degradation. Part of the ABC transporter complex GanPQS involved in the uptake of galactooligosaccharides. Binds mainly galactotetraose and galactotriose. This Bacillus subtilis (strain 168) protein is Galactooligosaccharide-binding protein.